The following is a 471-amino-acid chain: Monocarboxylate transporter 11 (471 aa).

Residues Met-1–Phe-13 are compositionally biased toward basic residues. The segment at Met-1 to Gly-31 is disordered. At Met-1 to Gly-35 the chain is on the cytoplasmic side. Over residues Pro-19–Gln-28 the composition is skewed to low complexity. Helical transmembrane passes span Gly-36–Leu-56, Ala-78–Leu-98, Pro-106–Ser-126, Leu-131–Leu-151, Val-163–Ala-183, Leu-198–Val-218, Ala-243–Val-263, Gly-273–Ala-293, Leu-312–Val-332, Gly-333–Ala-353, Leu-367–Leu-389, and Ala-407–Pro-427. Topologically, residues Arg-428–Cys-471 are cytoplasmic.

Belongs to the major facilitator superfamily. Monocarboxylate porter (TC 2.A.1.13) family. As to quaternary structure, interacts with isoform 2 of BSG. In terms of tissue distribution, expressed in liver, salivary gland and thyroid.

It is found in the endoplasmic reticulum membrane. The protein resides in the cell membrane. The catalysed reaction is pyruvate(out) + H(+)(out) = pyruvate(in) + H(+)(in). Its function is as follows. Proton-linked monocarboxylate transporter. It catalyzes the transport of pyruvate across the plasma membrane. Probably involved in hepatic lipid metabolism: overexpression results in an increase of triacylglycerol(TAG) levels, small increases in intracellular diacylglycerols and decreases in lysophosphatidylcholine, cholesterol ester and sphingomyelin lipids. The protein is Monocarboxylate transporter 11 (SLC16A11) of Homo sapiens (Human).